A 423-amino-acid polypeptide reads, in one-letter code: Adenylosuccinate synthetase (423 aa).

GTP contacts are provided by residues 12–18 and 40–42; these read GDEGKGK and GHT. The active-site Proton acceptor is aspartate 13. Aspartate 13 and glycine 40 together coordinate Mg(2+). IMP-binding positions include 13 to 16, 38 to 41, threonine 129, arginine 143, glutamine 221, threonine 236, and arginine 300; these read DEGK and NAGH. Histidine 41 functions as the Proton donor in the catalytic mechanism. 296–302 contributes to the substrate binding site; the sequence is SVTGRKR. Residues arginine 302, 328 to 330, and 408 to 410 contribute to the GTP site; these read KSD and SVG.

The protein belongs to the adenylosuccinate synthetase family. Homodimer. Mg(2+) is required as a cofactor.

It is found in the cytoplasm. It carries out the reaction IMP + L-aspartate + GTP = N(6)-(1,2-dicarboxyethyl)-AMP + GDP + phosphate + 2 H(+). The protein operates within purine metabolism; AMP biosynthesis via de novo pathway; AMP from IMP: step 1/2. Its function is as follows. Plays an important role in the de novo pathway of purine nucleotide biosynthesis. Catalyzes the first committed step in the biosynthesis of AMP from IMP. The polypeptide is Adenylosuccinate synthetase (Bacteroides fragilis (strain ATCC 25285 / DSM 2151 / CCUG 4856 / JCM 11019 / LMG 10263 / NCTC 9343 / Onslow / VPI 2553 / EN-2)).